Here is a 79-residue protein sequence, read N- to C-terminus: Cytochrome b (79 aa).

A run of 3 helical transmembrane segments spans residues 1 to 7 (SALFLAM), 31 to 52 (WLIR…YLHI), and 67 to 79 (WNIG…LTMA). His-37 and His-51 together coordinate heme b.

Belongs to the cytochrome b family. In terms of assembly, the cytochrome bc1 complex contains 11 subunits: 3 respiratory subunits (MT-CYB, CYC1 and UQCRFS1), 2 core proteins (UQCRC1 and UQCRC2) and 6 low-molecular weight proteins (UQCRH/QCR6, UQCRB/QCR7, UQCRQ/QCR8, UQCR10/QCR9, UQCR11/QCR10 and a cleavage product of UQCRFS1). This cytochrome bc1 complex then forms a dimer. Heme b serves as cofactor.

The protein localises to the mitochondrion inner membrane. Its function is as follows. Component of the ubiquinol-cytochrome c reductase complex (complex III or cytochrome b-c1 complex) that is part of the mitochondrial respiratory chain. The b-c1 complex mediates electron transfer from ubiquinol to cytochrome c. Contributes to the generation of a proton gradient across the mitochondrial membrane that is then used for ATP synthesis. This is Cytochrome b (MT-CYB) from Dipodomys heermanni (Heermann's kangaroo rat).